Here is a 333-residue protein sequence, read N- to C-terminus: Probable HTH-type transcriptional repressor ExuR (333 aa).

In terms of domain architecture, HTH lacI-type spans 2–56; it reads VTIKDIAKLANVSHTTVSRALNNSPYIKEHTKKKILELAEQLNYTPNVNAKSLAM. Positions 4-23 form a DNA-binding region, H-T-H motif; sequence IKDIAKLANVSHTTVSRALN.

Its function is as follows. Transcriptional repressor for the exu locus which is required for galacturonate utilization. The sequence is that of Probable HTH-type transcriptional repressor ExuR (exuR) from Bacillus subtilis (strain 168).